The primary structure comprises 471 residues: Putative multidrug resistance protein MdtD (471 aa).

Residues methionine 1–glutamine 11 lie on the Periplasmic side of the membrane. The chain crosses the membrane as a helical span at residues leucine 12–alanine 32. The Cytoplasmic segment spans residues leucine 33–histidine 48. Residues methionine 49–alanine 69 form a helical membrane-spanning segment. Residues aspartate 70–asparagine 76 are Periplasmic-facing. Residues isoleucine 77 to threonine 97 form a helical membrane-spanning segment. The Cytoplasmic segment spans residues leucine 98–leucine 101. A helical membrane pass occupies residues leucine 102–methionine 124. Topologically, residues lysine 125 to threonine 137 are periplasmic. The helical transmembrane segment at phenylalanine 138–valine 158 threads the bilayer. At glutamate 159 to histidine 164 the chain is on the cytoplasmic side. Residues tryptophan 165–methionine 185 form a helical membrane-spanning segment. The Periplasmic portion of the chain corresponds to proline 186–aspartate 196. Residues leucine 197 to serine 217 form a helical membrane-spanning segment. Residues lysine 218 to proline 224 lie on the Cytoplasmic side of the membrane. A helical transmembrane segment spans residues leucine 225 to alanine 245. The Periplasmic portion of the chain corresponds to arginine 246–threonine 262. The helical transmembrane segment at phenylalanine 263 to methionine 283 threads the bilayer. Topologically, residues threonine 284–proline 285 are cytoplasmic. A helical membrane pass occupies residues valine 286–methionine 306. Topologically, residues valine 307–threonine 341 are periplasmic. The helical transmembrane segment at leucine 342–leucine 362 threads the bilayer. The Cytoplasmic portion of the chain corresponds to glutamine 363–serine 395. Residues methionine 396 to phenylalanine 416 form a helical membrane-spanning segment. Topologically, residues glycine 417 to threonine 430 are periplasmic. Residues valine 431–alanine 451 form a helical membrane-spanning segment. Residues arginine 452–glutamine 471 lie on the Cytoplasmic side of the membrane.

It belongs to the major facilitator superfamily. TCR/Tet family.

The protein resides in the cell inner membrane. This chain is Putative multidrug resistance protein MdtD, found in Shigella sonnei (strain Ss046).